The following is a 796-amino-acid chain: Nuclear GTPase SLIP-GC (796 aa).

The segment covering methionine 1–glutamate 22 has biased composition (basic and acidic residues). The interval methionine 1–arginine 35 is disordered. Glycine 107–serine 114 contributes to the GTP binding site. Coiled-coil stretches lie at residues serine 158 to aspartate 185 and lysine 745 to lysine 775.

In terms of tissue distribution, expressed in germinal center B-cell and in lymphomas derived from germinal center B-cell.

Its subcellular location is the nucleus speckle. Nuclear GTPase found in germinal center B-cells, where it may inhibit function of the activation-induced cytidine deaminase AICDA. Reduces somatic hypermutation in B-cells which may enhance genome stability. This is Nuclear GTPase SLIP-GC (NUGGC) from Homo sapiens (Human).